The following is a 124-amino-acid chain: Fluoride-specific ion channel FluC (124 aa).

4 helical membrane passes run 4 to 24 (LLLVALGGSIGAVFRYLISIF), 35 to 55 (FGTLLVNVLGSFLMGVIYALG), 60 to 80 (ISPELKALIGIGLLGALTTFS), and 102 to 122 (VVLNLSLCLFMVYLGQQLVFS). Na(+) contacts are provided by G74 and T77.

It belongs to the fluoride channel Fluc/FEX (TC 1.A.43) family.

The protein resides in the cell inner membrane. The catalysed reaction is fluoride(in) = fluoride(out). Na(+) is not transported, but it plays an essential structural role and its presence is essential for fluoride channel function. Its function is as follows. Fluoride-specific ion channel. Important for reducing fluoride concentration in the cell, thus reducing its toxicity. This chain is Fluoride-specific ion channel FluC, found in Shewanella baltica (strain OS185).